Consider the following 256-residue polypeptide: Geranylgeranylglyceryl phosphate synthase (256 aa).

Mg(2+)-binding residues include Asp28 and Ser53. Sn-glycerol 1-phosphate-binding positions include 172–178 (YLEAGSG), 203–204 (GG), and 225–226 (GT).

Belongs to the GGGP/HepGP synthase family. Group II subfamily. Requires Mg(2+) as cofactor.

Its subcellular location is the cytoplasm. The enzyme catalyses sn-glycerol 1-phosphate + (2E,6E,10E)-geranylgeranyl diphosphate = sn-3-O-(geranylgeranyl)glycerol 1-phosphate + diphosphate. Its pathway is membrane lipid metabolism; glycerophospholipid metabolism. Prenyltransferase that catalyzes the transfer of the geranylgeranyl moiety of geranylgeranyl diphosphate (GGPP) to the C3 hydroxyl of sn-glycerol-1-phosphate (G1P). This reaction is the first ether-bond-formation step in the biosynthesis of archaeal membrane lipids. This chain is Geranylgeranylglyceryl phosphate synthase, found in Methanococcus maripaludis (strain DSM 14266 / JCM 13030 / NBRC 101832 / S2 / LL).